Consider the following 396-residue polypeptide: Putative nickel insertion protein (396 aa).

Belongs to the LarC family.

The chain is Putative nickel insertion protein from Methanosarcina mazei (strain ATCC BAA-159 / DSM 3647 / Goe1 / Go1 / JCM 11833 / OCM 88) (Methanosarcina frisia).